We begin with the raw amino-acid sequence, 374 residues long: Putative C-&gt;U-editing enzyme APOBEC-4 (374 aa).

In terms of domain architecture, CMP/dCMP-type deaminase spans 60-176; it reads PQTKHLTFYE…AWNRKALQSL (117 aa). His92 contacts Zn(2+). Glu94 functions as the Proton donor in the catalytic mechanism. Zn(2+) is bound by residues Cys126 and Cys133. The tract at residues 259–280 is disordered; the sequence is EKHPLGSAAPAQRQPTRGQDPR.

The protein belongs to the cytidine and deoxycytidylate deaminase family. It depends on Zn(2+) as a cofactor. Predominantly expressed in testis.

In terms of biological role, putative C to U editing enzyme whose physiological substrate is not yet known. This is Putative C-&gt;U-editing enzyme APOBEC-4 (Apobec4) from Mus musculus (Mouse).